The primary structure comprises 242 residues: ATP-dependent dethiobiotin synthetase BioD (242 aa).

15 to 20 contacts ATP; sequence DVGKTV. Mg(2+) is bound at residue T19. The active site involves K40. Position 44 (S44) interacts with substrate. Position 117 (E117) interacts with Mg(2+). Residues 117–120, 178–179, and 208–210 each bind ATP; these read EGAG, NQ, and PYS.

Belongs to the dethiobiotin synthetase family. As to quaternary structure, homodimer. The cofactor is Mg(2+).

It localises to the cytoplasm. The enzyme catalyses (7R,8S)-7,8-diammoniononanoate + CO2 + ATP = (4R,5S)-dethiobiotin + ADP + phosphate + 3 H(+). It functions in the pathway cofactor biosynthesis; biotin biosynthesis; biotin from 7,8-diaminononanoate: step 1/2. In terms of biological role, catalyzes a mechanistically unusual reaction, the ATP-dependent insertion of CO2 between the N7 and N8 nitrogen atoms of 7,8-diaminopelargonic acid (DAPA, also called 7,8-diammoniononanoate) to form a ureido ring. The sequence is that of ATP-dependent dethiobiotin synthetase BioD from Halalkalibacterium halodurans (strain ATCC BAA-125 / DSM 18197 / FERM 7344 / JCM 9153 / C-125) (Bacillus halodurans).